A 441-amino-acid chain; its full sequence is Ribosomal protein uS12 methylthiotransferase RimO (441 aa).

The MTTase N-terminal domain occupies 6 to 116; sequence PKVGFVSLGC…VMTAVHANLP (111 aa). [4Fe-4S] cluster is bound by residues Cys-15, Cys-51, Cys-80, Cys-147, Cys-151, and Cys-154. Residues 133–370 enclose the Radical SAM core domain; the sequence is LTPQHYAYLK…MEVQESISAE (238 aa). Residues 373–439 enclose the TRAM domain; it reads RRKIGRIETV…GHDLWAAPPA (67 aa).

The protein belongs to the methylthiotransferase family. RimO subfamily. [4Fe-4S] cluster is required as a cofactor.

It localises to the cytoplasm. It catalyses the reaction L-aspartate(89)-[ribosomal protein uS12]-hydrogen + (sulfur carrier)-SH + AH2 + 2 S-adenosyl-L-methionine = 3-methylsulfanyl-L-aspartate(89)-[ribosomal protein uS12]-hydrogen + (sulfur carrier)-H + 5'-deoxyadenosine + L-methionine + A + S-adenosyl-L-homocysteine + 2 H(+). Functionally, catalyzes the methylthiolation of an aspartic acid residue of ribosomal protein uS12. The chain is Ribosomal protein uS12 methylthiotransferase RimO from Methylobacillus flagellatus (strain ATCC 51484 / DSM 6875 / VKM B-1610 / KT).